We begin with the raw amino-acid sequence, 251 residues long: MQNSQLFTESLPKHIAIIMDGNGRWAKSKGQPRVFGHKKGVSAVRKTIAAASKLNIQAITLFAFSSENWRRPEEEVGLLMELFITVLSSEVKKLHKNNLRLRIIGDTSRFSERLQKKIVEAQELTASNTGMVINVAANYGGKWDITQAVQKVAQQVALGDLSAEDITEDDIAKHLTMSDLPEVDLLIRTSGECRISNFMLWQMAYAEMYFTPVFWPDFGEESLIEAITWFVNRERRFGCTGEQIKALMSAQ.

Aspartate 20 is a catalytic residue. Aspartate 20 lines the Mg(2+) pocket. Residues glycine 21–arginine 24, tryptophan 25, arginine 33, histidine 37, and serine 65–glutamate 67 contribute to the substrate site. Asparagine 68 functions as the Proton acceptor in the catalytic mechanism. Substrate contacts are provided by residues tryptophan 69, arginine 71, arginine 188, and arginine 194–serine 196. Glutamate 207 is a binding site for Mg(2+).

It belongs to the UPP synthase family. In terms of assembly, homodimer. Requires Mg(2+) as cofactor.

The enzyme catalyses 8 isopentenyl diphosphate + (2E,6E)-farnesyl diphosphate = di-trans,octa-cis-undecaprenyl diphosphate + 8 diphosphate. In terms of biological role, catalyzes the sequential condensation of isopentenyl diphosphate (IPP) with (2E,6E)-farnesyl diphosphate (E,E-FPP) to yield (2Z,6Z,10Z,14Z,18Z,22Z,26Z,30Z,34E,38E)-undecaprenyl diphosphate (di-trans,octa-cis-UPP). UPP is the precursor of glycosyl carrier lipid in the biosynthesis of bacterial cell wall polysaccharide components such as peptidoglycan and lipopolysaccharide. This is Ditrans,polycis-undecaprenyl-diphosphate synthase ((2E,6E)-farnesyl-diphosphate specific) from Vibrio vulnificus (strain CMCP6).